The primary structure comprises 779 residues: Protein WEAK CHLOROPLAST MOVEMENT UNDER BLUE LIGHT-like 1 (779 aa).

The interval 1–119 (MEDLKTTDAL…NAVSPRPLYS (119 aa)) is disordered. The segment covering 79-88 (DSPTTPSFVS) has biased composition (polar residues). Ser139 is modified (phosphoserine). 3 coiled-coil regions span residues 182–503 (RMKV…KQRE), 532–587 (KETR…ESRL), and 657–715 (AVSE…KWRE). Residues 650-661 (ANARVAAAVSEV) are compositionally biased toward low complexity. Disordered regions lie at residues 650-674 (ANARVAAAVSEVGEAKETEKRSLEK) and 694-759 (EKAE…NPVK). 2 stretches are compositionally biased toward basic and acidic residues: residues 662-674 (GEAKETEKRSLEK) and 694-718 (EKAEKAKEGKLGVEQELRKWREVSE). Positions 741-753 (TSVSNETETNPIP) are enriched in polar residues.

Belongs to the WEB family.

This Arabidopsis thaliana (Mouse-ear cress) protein is Protein WEAK CHLOROPLAST MOVEMENT UNDER BLUE LIGHT-like 1 (WEL1).